The primary structure comprises 366 residues: D-alanine--D-alanine ligase (366 aa).

The 204-residue stretch at 145-348 (KRLLDDAGLA…YQSLITKLIE (204 aa)) folds into the ATP-grasp domain. An ATP-binding site is contributed by 175–230 (VEQLGLPLFIKPANLGSSVGISKVNNEAEFNAALSMAFEYDLKVIIESAIVGREIE). Residues aspartate 302, glutamate 315, and asparagine 317 each contribute to the Mg(2+) site.

The protein belongs to the D-alanine--D-alanine ligase family. Requires Mg(2+) as cofactor. It depends on Mn(2+) as a cofactor.

The protein localises to the cytoplasm. It carries out the reaction 2 D-alanine + ATP = D-alanyl-D-alanine + ADP + phosphate + H(+). Its pathway is cell wall biogenesis; peptidoglycan biosynthesis. Cell wall formation. This chain is D-alanine--D-alanine ligase, found in Proteus mirabilis (strain HI4320).